Here is a 218-residue protein sequence, read N- to C-terminus: Large ribosomal subunit protein bL25 (218 aa).

A disordered region spans residues 178–218 (VTPPTVTEDPDATEEDNTTAESVEATGERNDDNLDRPGRVE). Residues 185 to 195 (EDPDATEEDNT) show a composition bias toward acidic residues. Residues 203–218 (TGERNDDNLDRPGRVE) show a composition bias toward basic and acidic residues.

This sequence belongs to the bacterial ribosomal protein bL25 family. CTC subfamily. Part of the 50S ribosomal subunit; part of the 5S rRNA/L5/L18/L25 subcomplex. Contacts the 5S rRNA. Binds to the 5S rRNA independently of L5 and L18.

In terms of biological role, this is one of the proteins that binds to the 5S RNA in the ribosome where it forms part of the central protuberance. The chain is Large ribosomal subunit protein bL25 from Shouchella clausii (strain KSM-K16) (Alkalihalobacillus clausii).